The sequence spans 257 residues: Diaminopimelate epimerase (257 aa).

Substrate contacts are provided by Asn13, Gln46, and Asn66. The Proton donor role is filled by Cys75. Substrate is bound by residues 76–77 (GN), Asn145, Asn175, and 193–194 (ER). Catalysis depends on Cys202, which acts as the Proton acceptor. 203-204 (GS) serves as a coordination point for substrate.

The protein belongs to the diaminopimelate epimerase family. Homodimer.

The protein resides in the cytoplasm. It carries out the reaction (2S,6S)-2,6-diaminopimelate = meso-2,6-diaminopimelate. It functions in the pathway amino-acid biosynthesis; L-lysine biosynthesis via DAP pathway; DL-2,6-diaminopimelate from LL-2,6-diaminopimelate: step 1/1. Catalyzes the stereoinversion of LL-2,6-diaminopimelate (L,L-DAP) to meso-diaminopimelate (meso-DAP), a precursor of L-lysine and an essential component of the bacterial peptidoglycan. In Gluconobacter oxydans (strain 621H) (Gluconobacter suboxydans), this protein is Diaminopimelate epimerase.